A 472-amino-acid polypeptide reads, in one-letter code: Cannabinoid receptor 1 (472 aa).

Residues 1-116 (MKSILDGLAD…CFMILNPSQQ (116 aa)) lie on the Extracellular side of the membrane. The tract at residues 2–23 (KSILDGLADTTFRTITTDLLYV) is required for mitochondrial localization. Residues N77 and N83 are each glycosylated (N-linked (GlcNAc...) asparagine). The helical transmembrane segment at 117–142 (LAIAVLSLTLGTFTVLENLLVLCVIL) threads the bilayer. The Cytoplasmic portion of the chain corresponds to 143–154 (HSRSLRCRPSYH). A helical transmembrane segment spans residues 155 to 175 (FIGSLAVADLLGSVIFVYSFV). The Extracellular segment spans residues 176–187 (DFHVFHRKDSPN). Residues 188-212 (VFLFKLGGVTASFTASVGSLFLTAI) form a helical membrane-spanning segment. Residues 213-232 (DRYISIHRPLAYKKIVTRPK) lie on the Cytoplasmic side of the membrane. A helical membrane pass occupies residues 233–255 (AVVAFCLMWTIAIVIAVLPLLGW). Residues 256-273 (NCKKLQSVCSDIFPLIDE) lie on the Extracellular side of the membrane. Residues 274–299 (TYLMFWIGVTSVLLLFIVYAYMYILW) traverse the membrane as a helical segment. Residues 300 to 344 (KAHIHAVRMIQRGTQKSIIIHTSEDGKVQVTRPDQARMDIRLAKT) lie on the Cytoplasmic side of the membrane. A helical membrane pass occupies residues 345-365 (LVLILVVLIICWGPLLAIMVY). Over 366 to 377 (DVFGKMNKLIKT) the chain is Extracellular. The helical transmembrane segment at 378 to 399 (VFAFCSMLCLLNSTVNPIIYAL) threads the bilayer. Over 400–472 (RSKDLRHAFR…VSTNTSAKAL (73 aa)) the chain is Cytoplasmic. The S-palmitoyl cysteine moiety is linked to residue C415. S425 and S429 each carry phosphoserine.

The protein belongs to the G-protein coupled receptor 1 family. As to quaternary structure, interacts (via C-terminus) with CNRIP1; this interaction attenuates constitutive, but not agonist-dependent, inhibition of voltage-gated Ca(2+) channels in neurons. Associates with G protein alpha subunits, including G(i) alpha-1/GNAI1, G(i) alpha-3/GNAI3 and G(o)-alpha/GNAO1; palmitoylation is important for interaction with GNAI3 and GNAO1. Palmitoylation at Cys-415 is important for recruitment at plasma membrane and lipid rafts and association with G protein alpha subunits. In terms of tissue distribution, expressed in cerebral arterial muscle cells and cerebral cortex (at protein level).

It localises to the cell membrane. Its subcellular location is the membrane raft. The protein resides in the mitochondrion outer membrane. The protein localises to the cell projection. It is found in the axon. It localises to the presynapse. With respect to regulation, hemopressin, a peptide derived from hemoglobin subunit alpha (HBA1 and/or HBA2), acts as an antagonist peptide: hemopressin-binding efficiently blocks cannabinoid receptor CNR1 and subsequent signaling. Functionally, G-protein coupled receptor for endogenous cannabinoids (eCBs), including N-arachidonoylethanolamide (also called anandamide or AEA) and 2-arachidonoylglycerol (2-AG), as well as phytocannabinoids, such as delta(9)-tetrahydrocannabinol (THC). Mediates many cannabinoid-induced effects, acting, among others, on food intake, memory loss, gastrointestinal motility, catalepsy, ambulatory activity, anxiety, chronic pain. Signaling typically involves reduction in cyclic AMP. In the hypothalamus, may have a dual effect on mitochondrial respiration depending upon the agonist dose and possibly upon the cell type. Increases respiration at low doses, while decreases respiration at high doses. At high doses, CNR1 signal transduction involves G-protein alpha-i protein activation and subsequent inhibition of mitochondrial soluble adenylate cyclase, decrease in cyclic AMP concentration, inhibition of protein kinase A (PKA)-dependent phosphorylation of specific subunits of the mitochondrial electron transport system, including NDUFS2. In the hypothalamus, inhibits leptin-induced reactive oxygen species (ROS) formation and mediates cannabinoid-induced increase in SREBF1 and FASN gene expression. In response to cannabinoids, drives the release of orexigenic beta-endorphin, not that of melanocyte-stimulating hormone alpha/alpha-MSH, from hypothalamic POMC neurons, hence promoting food intake. In the hippocampus, regulates cellular respiration and energy production in response to cannabinoids. Involved in cannabinoid-dependent depolarization-induced suppression of inhibition (DSI), a process in which depolarization of CA1 postsynaptic pyramidal neurons mobilizes eCBs, which retrogradely activate presynaptic CB1 receptors, transiently decreasing GABAergic inhibitory neurotransmission. Also reduces excitatory synaptic transmission. In superior cervical ganglions and cerebral vascular smooth muscle cells, inhibits voltage-gated Ca(2+) channels in a constitutive, as well as agonist-dependent manner. In cerebral vascular smooth muscle cells, inhibition of voltage-gated Ca(2+) channels leads to vasodilation and decrease in vascular tone. Induces leptin production in adipocytes and reduces LRP2-mediated leptin clearance in the kidney, hence participating in hyperleptinemia. In adipose tissue, CNR1 signaling leads to increased expression of SREBF1, ACACA and FASN genes. In the liver, activation by endocannabinoids leads to increased de novo lipogenesis and reduced fatty acid catabolism, associated with increased expression of SREBF1/SREBP-1, GCK, ACACA, ACACB and FASN genes. May also affect de novo cholesterol synthesis and HDL-cholesteryl ether uptake. Peripherally modulates energy metabolism. In high carbohydrate diet-induced obesity, may decrease the expression of mitochondrial dihydrolipoyl dehydrogenase/DLD in striated muscles, as well as that of selected glucose/ pyruvate metabolic enzymes, hence affecting energy expenditure through mitochondrial metabolism. In response to cannabinoid anandamide, elicits a pro-inflammatory response in macrophages, which involves NLRP3 inflammasome activation and IL1B and IL18 secretion. In macrophages infiltrating pancreatic islets, this process may participate in the progression of type-2 diabetes and associated loss of pancreatic beta-cells. This chain is Cannabinoid receptor 1 (CNR1), found in Felis catus (Cat).